We begin with the raw amino-acid sequence, 309 residues long: MEIILAEPRGFCAGVKRAVDILAITLEKYKNERQVYVLHEIVHNKYIVEDFKKQGVVFVSSIEEIEDNEGILIFSAHGVSKNIEDEAKRKGIQVIDATCPLVNKVHKEAKRYENSGKELILIGHENHPEVKGIRGRVNNPITLVQTLQDVYDLKVKDPDNLSYVTQTTLSIDDTRDIIAALKLRFPGITGPDLKDICYATQNRQNAVKKLAEIVDMVLVVGSKNSSNSNRLLDLCTARGKRAYLIDNYSCVNKSWFQGVEKIGITAGASAPDILVDELIDYLKVNLSVKISVMPGGITENVQFKIPNLV.

[4Fe-4S] cluster is bound at residue cysteine 12. Residues histidine 43 and histidine 77 each coordinate (2E)-4-hydroxy-3-methylbut-2-enyl diphosphate. 2 residues coordinate dimethylallyl diphosphate: histidine 43 and histidine 77. Positions 43 and 77 each coordinate isopentenyl diphosphate. Cysteine 99 contacts [4Fe-4S] cluster. Residue histidine 127 coordinates (2E)-4-hydroxy-3-methylbut-2-enyl diphosphate. Histidine 127 is a dimethylallyl diphosphate binding site. Histidine 127 serves as a coordination point for isopentenyl diphosphate. The active-site Proton donor is the glutamate 129. Threonine 167 provides a ligand contact to (2E)-4-hydroxy-3-methylbut-2-enyl diphosphate. Position 197 (cysteine 197) interacts with [4Fe-4S] cluster. Serine 225, serine 226, asparagine 227, and serine 269 together coordinate (2E)-4-hydroxy-3-methylbut-2-enyl diphosphate. Serine 225, serine 226, asparagine 227, and serine 269 together coordinate dimethylallyl diphosphate. Residues serine 225, serine 226, asparagine 227, and serine 269 each contribute to the isopentenyl diphosphate site.

This sequence belongs to the IspH family. Requires [4Fe-4S] cluster as cofactor.

The catalysed reaction is isopentenyl diphosphate + 2 oxidized [2Fe-2S]-[ferredoxin] + H2O = (2E)-4-hydroxy-3-methylbut-2-enyl diphosphate + 2 reduced [2Fe-2S]-[ferredoxin] + 2 H(+). It carries out the reaction dimethylallyl diphosphate + 2 oxidized [2Fe-2S]-[ferredoxin] + H2O = (2E)-4-hydroxy-3-methylbut-2-enyl diphosphate + 2 reduced [2Fe-2S]-[ferredoxin] + 2 H(+). The protein operates within isoprenoid biosynthesis; dimethylallyl diphosphate biosynthesis; dimethylallyl diphosphate from (2E)-4-hydroxy-3-methylbutenyl diphosphate: step 1/1. It participates in isoprenoid biosynthesis; isopentenyl diphosphate biosynthesis via DXP pathway; isopentenyl diphosphate from 1-deoxy-D-xylulose 5-phosphate: step 6/6. Catalyzes the conversion of 1-hydroxy-2-methyl-2-(E)-butenyl 4-diphosphate (HMBPP) into a mixture of isopentenyl diphosphate (IPP) and dimethylallyl diphosphate (DMAPP). Acts in the terminal step of the DOXP/MEP pathway for isoprenoid precursor biosynthesis. The protein is 4-hydroxy-3-methylbut-2-enyl diphosphate reductase of Wolbachia pipientis wMel.